The primary structure comprises 444 residues: Multidrug resistance protein MdtA (444 aa).

The N-terminal stretch at 1-20 is a signal peptide; the sequence is MKSQSKRTSRLFVFVGVVVA. Residues 37–52 show a composition bias toward polar residues; it reads NNTSGAQQSARGQDTS. 2 disordered regions span residues 37 to 60 and 398 to 444; these read NNTS…RNTP and TPRS…AEKS. The segment covering 409–419 has biased composition (low complexity); the sequence is ASAEKAAAEAE. Residues 435–444 show a composition bias toward polar residues; that stretch reads ARSTTAAEKS.

Belongs to the membrane fusion protein (MFP) (TC 8.A.1) family. As to quaternary structure, part of a tripartite efflux system composed of MdtA, MdtB and MdtC.

The protein localises to the cell inner membrane. This is Multidrug resistance protein MdtA from Yersinia pseudotuberculosis serotype O:3 (strain YPIII).